Consider the following 290-residue polypeptide: Shikimate dehydrogenase (NADP(+)) (290 aa).

Shikimate contacts are provided by residues 20–22 and T67; that span reads SLS. The active-site Proton acceptor is the K71. Shikimate-binding residues include N92 and D107. NADP(+)-binding positions include 130–134 and L227; that span reads GAGGA. Y229 is a shikimate binding site. G250 contacts NADP(+).

It belongs to the shikimate dehydrogenase family. In terms of assembly, homodimer.

The catalysed reaction is shikimate + NADP(+) = 3-dehydroshikimate + NADPH + H(+). The protein operates within metabolic intermediate biosynthesis; chorismate biosynthesis; chorismate from D-erythrose 4-phosphate and phosphoenolpyruvate: step 4/7. Functionally, involved in the biosynthesis of the chorismate, which leads to the biosynthesis of aromatic amino acids. Catalyzes the reversible NADPH linked reduction of 3-dehydroshikimate (DHSA) to yield shikimate (SA). This Syntrophomonas wolfei subsp. wolfei (strain DSM 2245B / Goettingen) protein is Shikimate dehydrogenase (NADP(+)).